The sequence spans 216 residues: Cytidylate kinase (216 aa).

7–15 (GPSGTGKST) contributes to the ATP binding site.

The protein belongs to the cytidylate kinase family. Type 1 subfamily.

It localises to the cytoplasm. The catalysed reaction is CMP + ATP = CDP + ADP. The enzyme catalyses dCMP + ATP = dCDP + ADP. The sequence is that of Cytidylate kinase from Chlamydia trachomatis serovar A (strain ATCC VR-571B / DSM 19440 / HAR-13).